The sequence spans 3587 residues: Tyrocidine synthase 2 (3587 aa).

Residues 466-1045 (AATMHELFSR…IQALAAYVEG (580 aa)) are domain 1 (Proline-activating). Carrier domains are found at residues 972-1047 (APTT…EGGE) and 2007-2082 (APAT…EHSE). O-(pantetheine 4'-phosphoryl)serine is present on residues serine 1007 and serine 2042. The segment at 1522 to 2081 (EQTAVVFGDK…RDLARLIEHS (560 aa)) is domain 2 (Phenylalanine-activating). The tract at residues 2540 to 3122 (YRADQTIQQL…NSRESEQGVV (583 aa)) is domain 3 (D-phenylalanine-activating). Positions 3017-3040 (NDKIDRKALPKPNQEENRTEQYAA) are disordered. Basic and acidic residues predominate over residues 3018-3035 (DKIDRKALPKPNQEENRT). The region spanning 3040–3114 (APQTELEQLL…EAALRVIPNS (75 aa)) is the Carrier 3 domain. Serine 3075 is modified (O-(pantetheine 4'-phosphoryl)serine).

Belongs to the ATP-dependent AMP-binding enzyme family. As to quaternary structure, large multienzyme complex of TycA, TycB and TycC. It depends on pantetheine 4'-phosphate as a cofactor.

It catalyses the reaction L-phenylalanine + ATP + H2O = D-phenylalanine + AMP + diphosphate + H(+). The protein operates within antibiotic biosynthesis; tyrocidine biosynthesis. Functionally, activates the second to fourth amino acids in tyrocidine (in tyrocidine A, Pro, Phe, and D-Phe) and epimerizes the last one. This is Tyrocidine synthase 2 (tycB) from Brevibacillus parabrevis.